Here is a 43-residue protein sequence, read N- to C-terminus: Protein PsbN (43 aa).

Residues 5 to 27 (TLVAIFISCLLVSFTGYAPYTAS) form a helical membrane-spanning segment.

Belongs to the PsbN family.

It localises to the plastid. The protein localises to the chloroplast thylakoid membrane. In terms of biological role, may play a role in photosystem I and II biogenesis. In Anthoceros angustus (Hornwort), this protein is Protein PsbN.